The following is a 450-amino-acid chain: Putative serine/threonine-protein kinase R517/R518 (450 aa).

Residues 9 to 290 form the Protein kinase domain; it reads KMTDTVLGKG…WSELFHHYWF (282 aa). ATP contacts are provided by residues 15 to 23 and K38; that span reads LGKGGFSEV. The active-site Proton acceptor is the D140.

It belongs to the protein kinase superfamily. Ser/Thr protein kinase family.

The enzyme catalyses L-seryl-[protein] + ATP = O-phospho-L-seryl-[protein] + ADP + H(+). The catalysed reaction is L-threonyl-[protein] + ATP = O-phospho-L-threonyl-[protein] + ADP + H(+). The protein is Putative serine/threonine-protein kinase R517/R518 of Acanthamoeba polyphaga mimivirus (APMV).